We begin with the raw amino-acid sequence, 436 residues long: 3-ketoacyl-CoA thiolase (436 aa).

Catalysis depends on cysteine 99, which acts as the Acyl-thioester intermediate. Catalysis depends on proton acceptor residues histidine 392 and cysteine 422.

It belongs to the thiolase-like superfamily. Thiolase family. Heterotetramer of two alpha chains (FadJ) and two beta chains (FadI).

Its subcellular location is the cytoplasm. The enzyme catalyses an acyl-CoA + acetyl-CoA = a 3-oxoacyl-CoA + CoA. Its pathway is lipid metabolism; fatty acid beta-oxidation. In terms of biological role, catalyzes the final step of fatty acid oxidation in which acetyl-CoA is released and the CoA ester of a fatty acid two carbons shorter is formed. The polypeptide is 3-ketoacyl-CoA thiolase (Serratia proteamaculans (strain 568)).